Consider the following 375-residue polypeptide: Alcohol dehydrogenase class-3 chain L (375 aa).

Position 1 is an N-acetylalanine (A1). Residues C46, H68, C98, C101, C104, C112, and C175 each contribute to the Zn(2+) site.

It belongs to the zinc-containing alcohol dehydrogenase family. Class-III subfamily. As to quaternary structure, homodimer or heterodimer with H chain. Zn(2+) is required as a cofactor.

The protein localises to the cytoplasm. It carries out the reaction a primary alcohol + NAD(+) = an aldehyde + NADH + H(+). The enzyme catalyses a secondary alcohol + NAD(+) = a ketone + NADH + H(+). The catalysed reaction is S-(hydroxymethyl)glutathione + NADP(+) = S-formylglutathione + NADPH + H(+). It catalyses the reaction S-(hydroxymethyl)glutathione + NAD(+) = S-formylglutathione + NADH + H(+). Its function is as follows. Class-III ADH is remarkably ineffective in oxidizing ethanol, but it readily catalyzes the oxidation of long-chain primary alcohols and the oxidation of S-(hydroxymethyl) glutathione. This Gadus morhua (Atlantic cod) protein is Alcohol dehydrogenase class-3 chain L.